A 182-amino-acid chain; its full sequence is Vacuolar protein sorting-associated protein 29 (182 aa).

Lysine 50 is modified (N6-acetyllysine).

It belongs to the VPS29 family. In terms of assembly, component of the commander complex consisting of the CCC subcomplex and the retriever subcomplex. Component of the heterotrimeric retriever complex formed by VPS26C, VPS29 and VPS35L; within the complex interacts with VPS35L. Component of the heterotrimeric retromer cargo-selective complex (CSC), also described as vacuolar protein sorting subcomplex (VPS) formed by VPS26 (VPS26A or VPS26B), VPS29 and VPS35. The CSC has a highly elongated structure with VPS26 and VPS29 binding independently at opposite distal ends of VPS35 as central platform. The CSC is believed to associate with variable sorting nexins to form functionally distinct retromer complex variants. The originally described retromer complex (also called SNX-BAR retromer) is a pentamer containing the CSC and a heterodimeric membrane-deforming subcomplex formed between SNX1 or SNX2 and SNX5 or SNX6 (also called SNX-BAR subcomplex); the respective CSC and SNX-BAR subcomplexes associate with low affinity. The CSC associates with SNX3 to form a SNX3-retromer complex. The CSC associates with SNX27, the WASH complex and the SNX-BAR subcomplex to form the SNX27-retromer complex. Interacts with VPS26A, VPS35, SNX1, SNX2, SNX3, SNX27, WASHC5. Interacts with TBC1D5; this interaction is blocked by VPS35L in the retriever complex. Interacts with SNX17; the interaction is indirect; SNX17 (via its C-terminus) interacts with the retriever complex (via VPS26C and VPS35L). Interacts with VPS26B and ANKRD27.

It is found in the cytoplasm. The protein localises to the membrane. It localises to the endosome membrane. In terms of biological role, component of the commander complex that is essential for endosomal recycling of transmembrane cargos; the commander complex is composed of the CCC subcomplex and the retriever subcomplex. Component of the retriever complex, which is a heterotrimeric complex related to retromer cargo-selective complex (CSC) and essential for retromer-independent retrieval and recycling of numerous cargos such as integrin alpha-5/beta-1 (ITGA5:ITGB1). Component of the retromer cargo-selective complex (CSC). The CSC is believed to be the core functional component of retromer or respective retromer complex variants acting to prevent missorting of selected transmembrane cargo proteins into the lysosomal degradation pathway. The recruitment of the CSC to the endosomal membrane involves RAB7A and SNX3. The SNX-BAR retromer mediates retrograde transport of cargo proteins from endosomes to the trans-Golgi network (TGN) and is involved in endosome-to-plasma membrane transport for cargo protein recycling. The SNX3-retromer mediates the retrograde endosome-to-TGN transport of WLS distinct from the SNX-BAR retromer pathway. The SNX27-retromer is believed to be involved in endosome-to-plasma membrane trafficking and recycling of a broad spectrum of cargo proteins. The CSC seems to act as recruitment hub for other proteins, such as the WASH complex and TBC1D5. Required to regulate transcytosis of the polymeric immunoglobulin receptor (pIgR-pIgA). In the endosomes, retriever complex drives the retrieval and recycling of NxxY-motif-containing cargo proteins by coupling to SNX17, a cargo essential for the homeostatic maintenance of numerous cell surface proteins associated with processes that include cell migration, cell adhesion, nutrient supply and cell signaling. The recruitment of the retriever complex to the endosomal membrane involves CCC and WASH complexes. Involved in GLUT1 endosome-to-plasma membrane trafficking; the function is dependent of association with ANKRD27. The chain is Vacuolar protein sorting-associated protein 29 (Vps29) from Mus musculus (Mouse).